Consider the following 776-residue polypeptide: Protocadherin beta-16 (776 aa).

Positions 1–28 (MEIGWMHNRRQRQVLVFFVLLSLSGAGA) are cleaved as a signal peptide. The Extracellular portion of the chain corresponds to 29-690 (ELGSYSVVEE…TQANSLTVYL (662 aa)). 5 consecutive Cadherin domains span residues 35-133 (VVEE…SPMF), 138-242 (MILK…APEF), 247-347 (YKVQ…PPQV), 352-451 (LTSP…APTF), and 456-561 (YTLF…SPFV). 2 N-linked (GlcNAc...) asparagine glycosylation sites follow: asparagine 418 and asparagine 436. A glycan (N-linked (GlcNAc...) asparagine) is linked at asparagine 567. The Cadherin 6 domain maps to 568-671 (GSAPCTELVP…LVDGFSQPFL (104 aa)). The helical transmembrane segment at 691–711 (VVALASVSSLFLFSVLLFVAV) threads the bilayer. The Cytoplasmic segment spans residues 712-776 (RLCRRSRAAS…LKPIIPNFSP (65 aa)).

The protein resides in the membrane. Functionally, potential calcium-dependent cell-adhesion protein. May be involved in the establishment and maintenance of specific neuronal connections in the brain. This Homo sapiens (Human) protein is Protocadherin beta-16.